Here is a 218-residue protein sequence, read N- to C-terminus: Tubulin polymerization-promoting protein (218 aa).

Residues 1–46 (MADSKAKPAKAANKTPPKSPGDPARAAKRLSLESEGANEGATAAPE) form a disordered region. Positions 1–115 (MADSKAKPAK…SCRTITFEQF (115 aa)) are mediates interaction with LIMK1. T15 carries the post-translational modification Phosphothreonine. A phosphoserine mark is found at S19, S31, and S34. At T42 the chain carries Phosphothreonine. Positions 60, 71, 79, and 82 each coordinate Zn(2+). Position 91 is a phosphothreonine (T91). At S106 the chain carries Phosphoserine. O-linked (GlcNAc) serine glycosylation occurs at S151. S158 and S159 each carry phosphoserine. Residues 166-192 (TDTSKFTGSHKERFDQSGKGKGKAGRV) form a disordered region. A compositionally biased stretch (basic and acidic residues) spans 174-183 (SHKERFDQSG).

This sequence belongs to the TPPP family. In terms of assembly, homodimer. Binds tubulin; binding is inhibited by GTP. Interacts with MAPK1. Interacts with GAPDH; the interaction is direct. Interacts with LIMK1 (via the PDZ domain); the interaction is direct. Interacts with LIMK2. Interacts with HDAC6; thereby inhibiting the tubulin deacetylase activity of HDAC6. Interacts with aggregated SNCA; may have a pro-aggregatory role in synucleinopathies. Interacts with DYNLL1. Interacts (via C-terminus) with S100A2, S100A6 and S100B; these interactions inhibit TPPP dimerization. The cofactor is Mg(2+). Post-translationally, phosphorylated by LIMK1 on serine residues; phosphorylation may alter the tubulin polymerization activity. Phosphorylation by LIMK2, but not LIMK1, regulates astral microtubule organization at early stage of mitosis. Phosphorylation by ROCK1 at Ser-31, Ser-106 and Ser-158 inhibits interaction with HDAC6, resulting in decreased acetylation of tubulin, increased cell motility and entry into S-phase. Phosphorylation by CDK1 inhibits the microtubule polymerizing activity. In terms of processing, degraded by the proteasome; zinc-binding inhibits degradation by the proteasome. In terms of tissue distribution, widely expressed with higher expression in brain (at protein level).

The protein resides in the golgi outpost. The protein localises to the cytoplasm. It is found in the cytoskeleton. Its subcellular location is the microtubule organizing center. It localises to the nucleus. The protein resides in the spindle. It catalyses the reaction GTP + H2O = GDP + phosphate + H(+). Regulator of microtubule dynamics that plays a key role in myelination by promoting elongation of the myelin sheath. Acts as a microtubule nucleation factor in oligodendrocytes: specifically localizes to the postsynaptic Golgi apparatus region, also named Golgi outpost, and promotes microtubule nucleation, an important step for elongation of the myelin sheath. Required for both uniform polarized growth of distal microtubules as well as directing the branching of proximal processes. Shows magnesium-dependent GTPase activity; the role of the GTPase activity is unclear. In addition to microtubule nucleation activity, also involved in microtubule bundling and stabilization of existing microtubules, thereby maintaining the integrity of the microtubule network. Regulates microtubule dynamics by promoting tubulin acetylation: acts by inhibiting the tubulin deacetylase activity of HDAC6. Also regulates cell migration: phosphorylation by ROCK1 inhibits interaction with HDAC6, resulting in decreased acetylation of tubulin and increased cell motility. Plays a role in cell proliferation by regulating the G1/S-phase transition. Involved in astral microtubule organization and mitotic spindle orientation during early stage of mitosis; this process is regulated by phosphorylation by LIMK2. The polypeptide is Tubulin polymerization-promoting protein (Mus musculus (Mouse)).